We begin with the raw amino-acid sequence, 544 residues long: Light-independent protochlorophyllide reductase subunit B (544 aa).

Residue Asp-36 participates in [4Fe-4S] cluster binding. Asp-286 acts as the Proton donor in catalysis. Substrate is bound at residue 421–422 (GM).

It belongs to the ChlB/BchB/BchZ family. As to quaternary structure, protochlorophyllide reductase is composed of three subunits; BchL, BchN and BchB. Forms a heterotetramer of two BchB and two BchN subunits. Requires [4Fe-4S] cluster as cofactor.

It catalyses the reaction chlorophyllide a + oxidized 2[4Fe-4S]-[ferredoxin] + 2 ADP + 2 phosphate = protochlorophyllide a + reduced 2[4Fe-4S]-[ferredoxin] + 2 ATP + 2 H2O. The protein operates within porphyrin-containing compound metabolism; bacteriochlorophyll biosynthesis (light-independent). Functionally, component of the dark-operative protochlorophyllide reductase (DPOR) that uses Mg-ATP and reduced ferredoxin to reduce ring D of protochlorophyllide (Pchlide) to form chlorophyllide a (Chlide). This reaction is light-independent. The NB-protein (BchN-BchB) is the catalytic component of the complex. The polypeptide is Light-independent protochlorophyllide reductase subunit B (Chloroflexus aggregans (strain MD-66 / DSM 9485)).